Here is a 155-residue protein sequence, read N- to C-terminus: Small ribosomal subunit protein eS19 (155 aa).

It belongs to the eukaryotic ribosomal protein eS19 family. As to quaternary structure, component of the small ribosomal subunit.

It localises to the cytoplasm. Its function is as follows. Component of the small ribosomal subunit. The ribosome is a large ribonucleoprotein complex responsible for the synthesis of proteins in the cell. Required for proper maturation of the small (40S) ribosomal subunit. In Entamoeba histolytica (strain ATCC 30459 / HM-1:IMSS / ABRM), this protein is Small ribosomal subunit protein eS19 (RPS19).